The chain runs to 281 residues: Radiation response metalloprotease IrrE (281 aa).

Histidine 82 serves as a coordination point for Zn(2+). Residue glutamate 83 is part of the active site. Residues histidine 86 and glutamate 113 each coordinate Zn(2+). Positions 262-281 (LPAGRSEPDADKPEAPGDQS) are disordered. Residues 267 to 281 (SEPDADKPEAPGDQS) show a composition bias toward basic and acidic residues.

Interacts with DdrOC.

With respect to regulation, protease activity is inhibited by EDTA. Plays a central regulatory role in DNA repair and protection pathways in response to radiation stress. Acts as a site-specific metalloprotease that cleaves and inactivates the repressor proteins DdrOC and DdrOP3, resulting in induced expression of genes required for DNA repair and cell survival after exposure to radiation. In Deinococcus deserti (strain DSM 17065 / CIP 109153 / LMG 22923 / VCD115), this protein is Radiation response metalloprotease IrrE.